Here is a 134-residue protein sequence, read N- to C-terminus: Small ribosomal subunit protein uS8c (134 aa).

This sequence belongs to the universal ribosomal protein uS8 family. Part of the 30S ribosomal subunit.

The protein resides in the plastid. Its subcellular location is the chloroplast. One of the primary rRNA binding proteins, it binds directly to 16S rRNA central domain where it helps coordinate assembly of the platform of the 30S subunit. This is Small ribosomal subunit protein uS8c (rps8) from Eucalyptus globulus subsp. globulus (Tasmanian blue gum).